A 701-amino-acid chain; its full sequence is MMKRQLHRMRQLAQTGSLGRTPETAEFLGEDLLQVEQRLEPAKRAAHNIHKRLQACLQGQSGADMDKRVKKLPLMALSTTMAESFKELDPDSSMGKALEMSCAIQNQLARILAEFEMTLERDVLQPLSRLSEEELPAILKHKKSLQKLVSDWNTLKSRLSQATKNSGSSQGLGGSPGSHSHTTMANKVETLKEEEEELKRKVEQCRDEYLADLYHFVTKEDSYANYFIRLLEIQADYHRRSLSSLDTALAELRENHGQADHSPSMTATHFPRVYGVSLATHLQELGREIALPIEACVMMLLSEGMKEEGLFRLAAGASVLKRLKQTMASDPHSLEEFCSDPHAVAGALKSYLRELPEPLMTFDLYDDWMRAASLKEPGARLQALQEVCSRLPPENLSNLRYLMKFLARLAEEQEVNKMTPSNIAIVLGPNLLWPPEKEGDQAQLDAASVSSIQVVGVVEALIQSADTLFPGDINFNVSGLFSAVTLQDTVSDRLASEELPSTAVPTPATTPAPAPAPAPAPAPALASAATKERTESEVPPRPASPKVTRSPPETAAPVEDMARRTKRPAPARPTMPPPQVSGSRSSPPAPPLPPGSGSPGTPQALPRRLVGSSLRAPTVPPPLPPTPPQPARRQSRRSPASPSPASPGPASPSPVSLSNPAQVDLGAATAEGGAPEAISGVPTPPAIPPQPRPRSLASETN.

Residues 1 to 10 show a composition bias toward basic residues; it reads MMKRQLHRMR. Disordered regions lie at residues 1–23 and 160–182; these read MMKR…RTPE and SQAT…HSHT. The interval 1–275 is interaction with CGNL1; it reads MMKRQLHRMR…TATHFPRVYG (275 aa). Residues 17–262 enclose the BAR domain; that stretch reads SLGRTPETAE…RENHGQADHS (246 aa). A phosphoserine mark is found at serine 175, serine 241, serine 262, and serine 264. The 194-residue stretch at 276–469 folds into the Rho-GAP domain; sequence VSLATHLQEL…ALIQSADTLF (194 aa). An interaction with CD2AP region spans residues 470–701; the sequence is PGDINFNVSG…RPRSLASETN (232 aa). The tract at residues 496–701 is disordered; that stretch reads SEELPSTAVP…RPRSLASETN (206 aa). Over residues 508–522 the composition is skewed to pro residues; it reads ATTPAPAPAPAPAPA. Phosphoserine occurs at positions 544 and 550. Composition is skewed to pro residues over residues 570 to 579 and 587 to 596; these read PARPTMPPPQ and PPAPPLPPGS. At threonine 601 the chain carries Phosphothreonine. Positions 616-625 match the SH3-binding motif; the sequence is APTVPPPLPP. 2 stretches are compositionally biased toward pro residues: residues 618 to 630 and 641 to 652; these read TVPP…PPQP and SPSPASPGPASP. The residue at position 626 (threonine 626) is a Phosphothreonine. Position 653 is a phosphoserine (serine 653). Low complexity predominate over residues 666–677; the sequence is GAATAEGGAPEA. Residues 682-692 are compositionally biased toward pro residues; that stretch reads PTPPAIPPQPR.

In terms of assembly, interacts with RAC1. Interacts with the exocyst via EXOC4 and EXOC8; required for the localization of both SH3BP1 and the exocyst to the leading edge of migrating cells. Interacts with CD2AP and CGNL1; probably part of a complex at cell junctions. Interacts with CAPZA1; recruits CAPZA1 to forming cell junctions. May interact with AFDN. Interacts with PLXND1; they dissociate upon SEMA3E binding to PLXND1 allowing SH3BP1 to transduce downstream signal through RAC1 inactivation. Interacts with ABL1, GRB2 and SRC (via SH3 domain).

Its subcellular location is the cell projection. The protein resides in the cell junction. It is found in the tight junction. The protein localises to the adherens junction. It localises to the phagocytic cup. Its subcellular location is the nucleus. The protein resides in the cytoplasm. It is found in the cytosol. Functionally, GTPase activating protein (GAP) which specifically converts GTP-bound Rho-type GTPases including RAC1 and CDC42 in their inactive GDP-bound form. By specifically inactivating RAC1 at the leading edge of migrating cells, it regulates the spatiotemporal organization of cell protrusions which is important for proper cell migration. Also negatively regulates CDC42 in the process of actin remodeling and the formation of epithelial cell junctions. Through its GAP activity toward RAC1 and/or CDC42 plays a specific role in phagocytosis of large particles. Specifically recruited by a PI3 kinase/PI3K-dependent mechanism to sites of large particles engagement, inactivates RAC1 and/or CDC42 allowing the reorganization of the underlying actin cytoskeleton required for engulfment. It also plays a role in angiogenesis and the process of repulsive guidance as part of a semaphorin-plexin signaling pathway. Following the binding of PLXND1 to extracellular SEMA3E it dissociates from PLXND1 and inactivates RAC1, inducing the intracellular reorganization of the actin cytoskeleton and the collapse of cells. The polypeptide is SH3 domain-binding protein 1 (Homo sapiens (Human)).